Consider the following 356-residue polypeptide: Uroporphyrinogen decarboxylase (356 aa).

Substrate is bound by residues 25–29, Asp-75, Tyr-152, Thr-207, and His-326; that span reads RQAGR.

This sequence belongs to the uroporphyrinogen decarboxylase family. Homodimer.

It is found in the cytoplasm. It carries out the reaction uroporphyrinogen III + 4 H(+) = coproporphyrinogen III + 4 CO2. Its pathway is porphyrin-containing compound metabolism; protoporphyrin-IX biosynthesis; coproporphyrinogen-III from 5-aminolevulinate: step 4/4. Catalyzes the decarboxylation of four acetate groups of uroporphyrinogen-III to yield coproporphyrinogen-III. In Magnetococcus marinus (strain ATCC BAA-1437 / JCM 17883 / MC-1), this protein is Uroporphyrinogen decarboxylase.